Reading from the N-terminus, the 692-residue chain is MARQVSLEMTRNIGIMAHIDAGKTTTTERILYYTGVSHKIGEVHDGAATMDWMEQEQERGITITSAATTCNWRDHRINIIDTPGHVDFTIEVERSLRVLDGAVAVFCSVGGVEPQSETVWRQADKYRVPRIAFINKMDRVGADFFRGIAMIKDRLKANPVPLQIPIGSEENYKGLVDLIEMKGIVFNDESMGATFDTIEIPADLLEQAQEYREALIEEVSSHDDVLMEKYLGGEEISNAELKAAIRQATLDIKICPVICGSAFKNKGVQHLLDAVLDYMPAPTDIPAIQGVDANTDAPIERHASDSEPFAALGFKIMTDPFVGQLCFFRVYSGVIQSGSYVYNATKGKRERIGRILKMHANKREEIKEVYAGDIAAAVGLKYTTTGDTLCAEDHAVILESIEFPEPVISIAIEPKTKADQEKLGLSLGKLASEDPSFRVKTDEETGQTIISGMGELHLEIIVDRLFREFKVEANVGKPQVAYRETITKKVKAEGKFVRQSGGRGQFGHVWLEVEPQEAGKGYEFVDAIKGGVVPREYIPAVDKGIKEALDNGVMAGFPVVDIKVTLVDGSYHEVDSSEMAFKIAGSMGFKEGCQKASPIILEPIMSVEVVVPEEYMGDVIGDLNSRRGRIMGMEGRAGAQVVASMVPLAQMFGYSTDLRSATQGRATYSMTFDHYEPVPKSVAEEIVAKVKG.

A tr-type G domain is found at 8–283 (EMTRNIGIMA…AVLDYMPAPT (276 aa)). GTP contacts are provided by residues 17–24 (AHIDAGKT), 81–85 (DTPGH), and 135–138 (NKMD).

It belongs to the TRAFAC class translation factor GTPase superfamily. Classic translation factor GTPase family. EF-G/EF-2 subfamily.

The protein resides in the cytoplasm. In terms of biological role, catalyzes the GTP-dependent ribosomal translocation step during translation elongation. During this step, the ribosome changes from the pre-translocational (PRE) to the post-translocational (POST) state as the newly formed A-site-bound peptidyl-tRNA and P-site-bound deacylated tRNA move to the P and E sites, respectively. Catalyzes the coordinated movement of the two tRNA molecules, the mRNA and conformational changes in the ribosome. The polypeptide is Elongation factor G (Citrifermentans bemidjiense (strain ATCC BAA-1014 / DSM 16622 / JCM 12645 / Bem) (Geobacter bemidjiensis)).